Here is a 150-residue protein sequence, read N- to C-terminus: FAD synthase (150 aa).

ATP contacts are provided by residues Thr11–Phe12, His16–His19, Asp96, and Tyr124.

The protein belongs to the archaeal FAD synthase family. Homodimer. Requires a divalent metal cation as cofactor.

It carries out the reaction FMN + ATP + H(+) = FAD + diphosphate. It participates in cofactor biosynthesis; FAD biosynthesis; FAD from FMN: step 1/1. Catalyzes the transfer of the AMP portion of ATP to flavin mononucleotide (FMN) to produce flavin adenine dinucleotide (FAD) coenzyme. The protein is FAD synthase of Methanococcus maripaludis (strain DSM 14266 / JCM 13030 / NBRC 101832 / S2 / LL).